Here is a 190-residue protein sequence, read N- to C-terminus: Subtilisin inhibitor CLSI-II (190 aa).

Disulfide bonds link Cys-44/Cys-88 and Cys-142/Cys-149.

The protein belongs to the protease inhibitor I3 (leguminous Kunitz-type inhibitor) family. In terms of assembly, forms active dimers on storage in aqueous solution, possibly through formation of an intermolecular disulfide bond. Post-translationally, the N-terminal Asn is removed in about 50% of both the CLSI-II and CLSI-III chains.

It is found in the secreted. Functionally, inhibits subtilisin-type microbial serine proteases incuding proteinase K, subtilisin BPN', subtilisin Carlsberg and subtilisin E in a non-stoichiometric manner. Weakly inhibits A.oryzae protease and some metalloproteases including pronase E. Does not inhibit trypsin, chymotrypsin, S.griseus alkaline protease or A.lyticus lysyl endopeptidase. CLSI-II has a wider inhibitory specificity than CLSI-III. The sequence is that of Subtilisin inhibitor CLSI-II from Canavalia lineata (Beach bean).